Consider the following 216-residue polypeptide: GTP-binding nuclear protein Ran, testis-specific isoform (216 aa).

Alanine 2 bears the N-acetylalanine mark. The region spanning proline 7 to aspartate 171 is the Small GTPase Ran-type domain. GTP is bound at residue glycine 17 to threonine 24. Residue threonine 24 is modified to Phosphothreonine. Residues lysine 37–valine 45 are switch-I. The residue at position 60 (lysine 60) is an N6-acetyllysine. Aspartate 65–glutamine 69 contacts GTP. The tract at residues glycine 68–glutamine 84 is switch-II. Lysine 71 bears the N6-acetyllysine; alternate mark. Residue lysine 71 forms a Glycyl lysine isopeptide (Lys-Gly) (interchain with G-Cter in SUMO2); alternate linkage. Lysine 71 participates in a covalent cross-link: Glycyl lysine isopeptide (Lys-Gly) (interchain with G-Cter in ubiquitin); alternate. An N6-acetyllysine modification is found at lysine 99. Asparagine 122–aspartate 125 is a GTP binding site. The residue at position 134 (lysine 134) is an N6-acetyllysine. A Glycyl lysine isopeptide (Lys-Gly) (interchain with G-Cter in SUMO2) cross-link involves residue lysine 152. Lysine 159 carries the N6-acetyllysine; alternate modification. Residue lysine 159 is modified to N6-succinyllysine; alternate.

The protein belongs to the small GTPase superfamily. Ran family. Testis specific.

Its subcellular location is the nucleus. It catalyses the reaction GTP + H2O = GDP + phosphate + H(+). GTP-binding protein involved in nucleocytoplasmic transport. Required for the import of protein into the nucleus and also for RNA export. Involved in chromatin condensation and control of cell cycle. The chain is GTP-binding nuclear protein Ran, testis-specific isoform (Rasl2-9) from Rattus norvegicus (Rat).